A 903-amino-acid chain; its full sequence is Ras and Rab interactor 2 (903 aa).

The tract at residues 44–73 (NGLEPSETHSMVRHKDGGYSEDKDGKTCPR) is disordered. A compositionally biased stretch (basic and acidic residues) spans 56-73 (RHKDGGYSEDKDGKTCPR). An SH2 domain is found at 97–190 (WLQLSLSEEE…VLPFTLKLPY (94 aa)). 2 disordered regions span residues 282-455 (QDLS…EFDR) and 471-491 (EDYEGESDQETMAPPIKSKKK). The span at 306 to 315 (SPPPRPPPPA) shows a compositional bias: pro residues. A compositionally biased stretch (polar residues) spans 318–338 (SLHTSPGLSRTEPQTSMPETV). The residue at position 366 (serine 366) is a Phosphoserine. A compositionally biased stretch (pro residues) spans 419–431 (APPPGSESQPPPC). The segment covering 439–450 (SDMSLSTSSSDS) has biased composition (low complexity). Positions 506 to 775 (LRKMSGVFSS…ARLLSSEARD (270 aa)) are interaction with RAB5B. At serine 510 the chain carries Phosphoserine. Threonine 518 is modified (phosphothreonine). Residues 627–766 (DGSWKQLKEN…IKNFQEEQAA (140 aa)) enclose the VPS9 domain. The Ras-associating domain maps to 796–887 (FQNYLRVAFQ…FHFVYKRIKS (92 aa)).

Belongs to the RIN (Ras interaction/interference) family. Homotetramer; probably composed of anti-parallel linkage of two parallel dimers. Interacts with Ras. Interacts with RAB5B, with a much higher affinity for GTP-bound activated RAB5B. Does not interact with other members of the Rab family.

The protein localises to the cytoplasm. Ras effector protein. May function as an upstream activator and/or downstream effector for RAB5B in endocytic pathway. May function as a guanine nucleotide exchange (GEF) of RAB5B, required for activating the RAB5 proteins by exchanging bound GDP for free GTP. The chain is Ras and Rab interactor 2 (Rin2) from Mus musculus (Mouse).